Consider the following 93-residue polypeptide: Defensin alpha 4 (93 aa).

Residues 1–19 (MRTLTLLITLLLLALHTQA) form the signal peptide. Residues 20-62 (ESPQERAKAAPDQDMVMEDQDIFISFGGYKGTVLQDAVVKAGQ) constitute a propeptide that is removed on maturation. 3 cysteine pairs are disulfide-bonded: Cys-64–Cys-92, Cys-66–Cys-81, and Cys-71–Cys-91.

The protein belongs to the alpha-defensin family. Expressed in neutrophils (at protein level). Highest expression in bone marrow and to a much lesser extent in small intestine.

The protein localises to the secreted. In terms of biological role, host-defense peptide that has antimicrobial activity against Gram-positive and Gram-negative bacteria and fungi (in vitro). Exhibits activity against E.coli, A.calcoaceticus, S,aureus and C.albicans. The polypeptide is Defensin alpha 4 (Rattus norvegicus (Rat)).